A 102-amino-acid polypeptide reads, in one-letter code: MNKPLIRTERNGDWLRFGVKVQPRSSRNQIVGEHEGDLKIKVMAPPVEGAANQALQKFLAELFKLPKKDIRIVRGETSRHKIVEIRGIEAEKLLAFIPQITK.

Belongs to the UPF0235 family.

The protein is UPF0235 protein Swol_0959 of Syntrophomonas wolfei subsp. wolfei (strain DSM 2245B / Goettingen).